The following is an 835-amino-acid chain: Serine/threonine-protein kinase TNNI3K (835 aa).

Positions 21–51 (SESYVITIERLEDDLQIKEKELTELRNIFGS) form a coiled coil. 10 ANK repeats span residues 66 to 96 (NGLSLLHLCCICGGKKSHIRTLMLKGLRPSR), 100 to 129 (NGFTALHLAVYKDNAELITSLLHSGADIQQ), 133 to 162 (GGLTALHIATIAGHLEAADVLLQHGANVNI), 166 to 195 (VFFTPLHIAAYYGHEQVTRLLLKFGADVNV), 199 to 228 (VGDRPLHLASAKGFLNIAKLLMEEGSKADV), 234 to 263 (EDHVPLHFCSRFGHHDIVKYLLQSDLEVQP), 269 to 298 (YGDTPLHLACYNGKFEVAKEIIQISGTESL), 304 to 335 (FSETAFHSACTYGKSIDLVKFLLDQNVININH), 339 to 368 (DGHTGLHSACYHGHIRLVQFLLDNGADMNL), and 381 to 410 (DEQTCLMWAYEKGHDAIVTLLKHYKRPQDE). Positions 463-723 (IEFHEIIGSG…EVVMKLEECL (261 aa)) constitute a Protein kinase domain. Residues 469-477 (IGSGSFGKV) and K490 contribute to the ATP site. Catalysis depends on D588, which acts as the Proton acceptor. Residues 732 to 746 (ASSNSSGSLSPSSSS) show a composition bias toward low complexity. The disordered stretch occupies residues 732–751 (ASSNSSGSLSPSSSSDCLVN).

It belongs to the protein kinase superfamily. TKL Ser/Thr protein kinase family. MAP kinase kinase kinase subfamily. In terms of assembly, interacts with TNNI3, ACTC1, ACTA1, MYBPC3, AIP, FABP3 and HADHB. Mg(2+) serves as cofactor. Post-translationally, autophosphorylated. As to expression, highly expressed in both adult and fetal heart.

The protein localises to the nucleus. It localises to the cytoplasm. The enzyme catalyses L-seryl-[protein] + ATP = O-phospho-L-seryl-[protein] + ADP + H(+). The catalysed reaction is L-threonyl-[protein] + ATP = O-phospho-L-threonyl-[protein] + ADP + H(+). In terms of biological role, may play a role in cardiac physiology. This is Serine/threonine-protein kinase TNNI3K from Homo sapiens (Human).